The chain runs to 332 residues: tRNA dimethylallyltransferase (332 aa).

Position 17–24 (17–24 (GPTCSGKS)) interacts with ATP. Substrate is bound at residue 19–24 (TCSGKS). Interaction with substrate tRNA regions lie at residues 42–45 (DSMQ) and 166–170 (QRVAR).

The protein belongs to the IPP transferase family. In terms of assembly, monomer. The cofactor is Mg(2+).

The catalysed reaction is adenosine(37) in tRNA + dimethylallyl diphosphate = N(6)-dimethylallyladenosine(37) in tRNA + diphosphate. Catalyzes the transfer of a dimethylallyl group onto the adenine at position 37 in tRNAs that read codons beginning with uridine, leading to the formation of N6-(dimethylallyl)adenosine (i(6)A). This chain is tRNA dimethylallyltransferase, found in Gluconacetobacter diazotrophicus (strain ATCC 49037 / DSM 5601 / CCUG 37298 / CIP 103539 / LMG 7603 / PAl5).